The primary structure comprises 292 residues: Putative OX-2 membrane glycoprotein homolog (292 aa).

The N-terminal stretch at 1–18 (MSPLMLRLLPLLCIIISA) is a signal peptide. One can recognise an Ig-like V-type domain in the interval 24-136 (PETSPSLVYE…TFTVDNEKTS (113 aa)). C42 and C126 are oxidised to a cystine. 4 N-linked (GlcNAc...) asparagine; by host glycosylation sites follow: N45, N57, N72, and N195. The 91-residue stretch at 147 to 237 (PIVVLYFRYL…TNQKASALVT (91 aa)) folds into the Ig-like C2-type domain. The chain crosses the membrane as a helical span at residues 263-283 (VFTWIVPLILILIISVMVLLI).

The protein localises to the host membrane. This Human herpesvirus 6B (strain Z29) (HHV-6 variant B) protein is Putative OX-2 membrane glycoprotein homolog (U85).